The following is a 255-amino-acid chain: 1-(5-phosphoribosyl)-5-[(5-phosphoribosylamino)methylideneamino] imidazole-4-carboxamide isomerase (255 aa).

Aspartate 8 (proton acceptor) is an active-site residue. The active-site Proton donor is the aspartate 129.

The protein belongs to the HisA/HisF family.

It localises to the cytoplasm. The catalysed reaction is 1-(5-phospho-beta-D-ribosyl)-5-[(5-phospho-beta-D-ribosylamino)methylideneamino]imidazole-4-carboxamide = 5-[(5-phospho-1-deoxy-D-ribulos-1-ylimino)methylamino]-1-(5-phospho-beta-D-ribosyl)imidazole-4-carboxamide. The protein operates within amino-acid biosynthesis; L-histidine biosynthesis; L-histidine from 5-phospho-alpha-D-ribose 1-diphosphate: step 4/9. The protein is 1-(5-phosphoribosyl)-5-[(5-phosphoribosylamino)methylideneamino] imidazole-4-carboxamide isomerase of Prochlorococcus marinus (strain AS9601).